Reading from the N-terminus, the 456-residue chain is Nitrogenase molybdenum-iron protein beta chain (456 aa).

C23, C48, C106, and S141 together coordinate [8Fe-7S] cluster.

The protein belongs to the NifD/NifK/NifE/NifN family. Tetramer of two alpha and two beta chains. Forms complex with the iron protein (nitrogenase component 2). [8Fe-7S] cluster is required as a cofactor.

The catalysed reaction is N2 + 8 reduced [2Fe-2S]-[ferredoxin] + 16 ATP + 16 H2O = H2 + 8 oxidized [2Fe-2S]-[ferredoxin] + 2 NH4(+) + 16 ADP + 16 phosphate + 6 H(+). This molybdenum-iron protein is part of the nitrogenase complex that catalyzes the key enzymatic reactions in nitrogen fixation. In Methanosarcina barkeri, this protein is Nitrogenase molybdenum-iron protein beta chain (nifK2).